The sequence spans 202 residues: MARYRGPRLRVVRRLGELPGLTRKNARRAYPPGQHGQNRRKRSEYAIRLEEKQKLRFNYGVSEKQLIRYVRRARRATGSTGQTLLQLLEMRLDNTVFRLGMAGTIPAARQLVNHGHILVNDRVVDIASYQCRPGDVIKVRDQDKSRKLVQANMEYPGLANLPSHLEFDKNTLIGKVNGVIEREWIALNINELLVVEYYSRQA.

The disordered stretch occupies residues 22–43 (TRKNARRAYPPGQHGQNRRKRS). Residues 90–152 (MRLDNTVFRL…DKSRKLVQAN (63 aa)) form the S4 RNA-binding domain.

It belongs to the universal ribosomal protein uS4 family. Part of the 30S ribosomal subunit. Contacts protein S5. The interaction surface between S4 and S5 is involved in control of translational fidelity.

Its function is as follows. One of the primary rRNA binding proteins, it binds directly to 16S rRNA where it nucleates assembly of the body of the 30S subunit. In terms of biological role, with S5 and S12 plays an important role in translational accuracy. This chain is Small ribosomal subunit protein uS4, found in Gloeothece citriformis (strain PCC 7424) (Cyanothece sp. (strain PCC 7424)).